Consider the following 301-residue polypeptide: uncharacterized protein (301 aa).

This is an uncharacterized protein from Escherichia coli (strain K12).